Consider the following 221-residue polypeptide: Cysteine protease inhibitor 8 (221 aa).

The N-terminal stretch at 1-26 (IPSINILSFLLLSSTLSLVAFARSFT) is a signal peptide. The propeptide occupies 27–42 (SENPIVLPTTCHDDDN). A Vacuolar targeting signal motif is present at residues 29–34 (NPIVLP). 2 disulfide bridges follow: C84/C136 and C184/C190.

This sequence belongs to the protease inhibitor I3 (leguminous Kunitz-type inhibitor) family.

It localises to the vacuole. Functionally, inhibitor of cysteine proteases. May protect the plant by inhibiting proteases of invading organisms. This is Cysteine protease inhibitor 8 from Solanum tuberosum (Potato).